The following is a 376-amino-acid chain: Arf-GAP with dual PH domain-containing protein 2 (376 aa).

An Arf-GAP domain is found at 9–130 (KRLLELLQAA…EFMAEKAVSP (122 aa)). The segment at 25–48 (CADCGAADPDWASYKLGVFICLHC) adopts a C4-type zinc-finger fold. PH domains lie at 131–232 (PGDR…AARL) and 254–360 (NYLK…GVLS).

As to expression, expressed in many tissues, with highest levels in fat, heart and skeletal muscle. Also detected in kidney, liver and lung.

It localises to the cytoplasm. It is found in the cell membrane. Functionally, GTPase-activating protein for the ADP ribosylation factor family (Potential). Binds phosphatidylinositol 4,5-bisphosphate, phosphatidylinositol 3,4,5-trisphosphate (PtdInsP3) and inositol 1,3,4,5-tetrakisphosphate (InsP4). Binding of phosphatidylinositol 3,5-bisphosphate and phosphatidylinositol 3,4-bisphosphate occurs at a much lower affinity. Possesses a stoichiometry of two binding sites for InsP4 with identical affinity. The chain is Arf-GAP with dual PH domain-containing protein 2 (Adap2) from Rattus norvegicus (Rat).